A 345-amino-acid chain; its full sequence is Src kinase-associated phosphoprotein 1 (345 aa).

The PH domain maps to 109–212 (KIFKQGYLER…WVEQIQFLVK (104 aa)). The disordered stretch occupies residues 226-274 (ETYDDIESTESSPVVGLTNDSENSLQEDDVYESIPGDEETEESEDENYE). The segment covering 250-272 (LQEDDVYESIPGDEETEESEDEN) has biased composition (acidic residues). The SH3 domain maps to 283 to 344 (FYGDYYQGLW…PKDYLTLAFD (62 aa)).

This sequence belongs to the SKAP family. Homodimer. In terms of processing, phosphorylated on tyrosines.

The protein resides in the cytoplasm. It is found in the nucleus. The protein localises to the cell membrane. Its function is as follows. Positively regulates T-cell receptor signaling. Required for optimal conjugation between T-cells and antigen-presenting cells. This chain is Src kinase-associated phosphoprotein 1 (skap1), found in Xenopus tropicalis (Western clawed frog).